The sequence spans 400 residues: Dual specificity mitogen-activated protein kinase kinase 2 (400 aa).

At Met-1 the chain carries N-acetylmethionine. Ser-23 carries the phosphoserine modification. One can recognise a Protein kinase domain in the interval 72–369 (FERISELGAG…LKMLMSHTFI (298 aa)). ATP is bound by residues 78–86 (LGAGNGGVV) and Lys-101. The Proton acceptor role is filled by Asp-194. Residue Ser-222 is modified to Phosphoserine; by RAF. Ser-226, Ser-293, Ser-295, and Ser-306 each carry phosphoserine. The interval 288–309 (EGEPHSISPRPRPPGRPISGHG) is disordered. Phosphothreonine occurs at positions 394 and 396.

It belongs to the protein kinase superfamily. STE Ser/Thr protein kinase family. MAP kinase kinase subfamily. In terms of assembly, interacts with MORG1. Interacts with SGK1. Interacts with KSR1. Interacts with KSR1 and BRAF; the interaction with KSR1 mediates KSR1-BRAF dimerization. Interacts with GLS. It depends on Mg(2+) as a cofactor. In terms of processing, MAPKK is itself dependent on Ser/Thr phosphorylation for activity catalyzed by MAP kinase kinase kinases (RAF or MEKK1).

Its subcellular location is the cytoplasm. The protein resides in the membrane. The catalysed reaction is L-seryl-[protein] + ATP = O-phospho-L-seryl-[protein] + ADP + H(+). The enzyme catalyses L-threonyl-[protein] + ATP = O-phospho-L-threonyl-[protein] + ADP + H(+). It catalyses the reaction L-tyrosyl-[protein] + ATP = O-phospho-L-tyrosyl-[protein] + ADP + H(+). Catalyzes the concomitant phosphorylation of a threonine and a tyrosine residue in a Thr-Glu-Tyr sequence located in MAP kinases. Activates the ERK1 and ERK2 MAP kinases. Activates BRAF in a KSR1 or KSR2-dependent manner; by binding to KSR1 or KSR2 releases the inhibitory intramolecular interaction between KSR1 or KSR2 protein kinase and N-terminal domains which promotes KSR1 or KSR2-BRAF dimerization and BRAF activation. This Canis lupus familiaris (Dog) protein is Dual specificity mitogen-activated protein kinase kinase 2 (MAP2K2).